We begin with the raw amino-acid sequence, 330 residues long: 2-methyl-6-phytyl-1,4-hydroquinone methyltransferase 1, chloroplastic (330 aa).

A chloroplast-targeting transit peptide spans M1–K45. Residues C46–T295 lie on the Chloroplast intermembrane side of the membrane. The segment at V107 to F116 is SAM motif I. Positions V152–P165 are SAM motif II. The segment at R193 to P206 is SAM motif III. Residues F296–Y316 form a helical membrane-spanning segment. Residues M317–I330 are Stromal-facing.

The protein belongs to the class I-like SAM-binding methyltransferase superfamily. MPBQ/MBSQ MT family.

The protein localises to the plastid. It localises to the chloroplast inner membrane. It catalyses the reaction 2-methyl-6-phytyl-1,4-benzene-1,4-diol + S-adenosyl-L-methionine = 2,3-dimethyl-6-phytylbenzene-1,4-diol + S-adenosyl-L-homocysteine + H(+). The catalysed reaction is 2-methyl-6-(all-trans-nonaprenyl)benzene-1,4-diol + S-adenosyl-L-methionine = plastoquinol-9 + S-adenosyl-L-homocysteine + H(+). The enzyme catalyses 6-geranylgeranyl-2-methylbenzene-1,4-diol + S-adenosyl-L-methionine = 6-geranylgeranyl-2,3-dimethylbenzene-1,4-diol + S-adenosyl-L-homocysteine + H(+). The protein operates within cofactor biosynthesis; tocopherol biosynthesis. Functionally, involved in a key methylation step in both tocopherols (vitamin E) and plastoquinone synthesis. Catalyzes the conversion of 2-methyl-6-phytyl-1,4-hydroquinone (MPBQ) to 2,3-dimethyl-6-phytyl-1,4-hydroquinone (DMPQ, a substrate for tocopherol cyclase), and 2-methyl-6-solanyl-1,4-benzoquinone (MSBQ) to plastoquinone. The chain is 2-methyl-6-phytyl-1,4-hydroquinone methyltransferase 1, chloroplastic (ARSM2) from Oryza sativa subsp. japonica (Rice).